An 85-amino-acid chain; its full sequence is Large ribosomal subunit protein bL27 (85 aa).

Residues 1–21 form a disordered region; the sequence is MAHKKGGGTTRNGRDSESKRL.

It belongs to the bacterial ribosomal protein bL27 family.

This Janthinobacterium sp. (strain Marseille) (Minibacterium massiliensis) protein is Large ribosomal subunit protein bL27.